Here is a 566-residue protein sequence, read N- to C-terminus: Acetyl-coenzyme A carboxylase carboxyl transferase subunits beta/alpha (566 aa).

Residues 1 to 243 (MNPTTPRGGQ…QTAEFLLRHG (243 aa)) are acetyl-coenzyme A carboxylase carboxyl transferase subunit beta. One can recognise a CoA carboxyltransferase N-terminal domain in the interval 11-280 (LWSRCGGCAS…PVGAGHESEC (270 aa)). The interval 11–534 (LWSRCGGCAS…REAVLAHLVP (524 aa)) is carboxyltransferase. Positions 15, 18, 34, and 37 each coordinate Zn(2+). The segment at 244–557 (QVDLVVPRHA…RRRFRRFGAA (314 aa)) is acetyl-coenzyme A carboxylase carboxyl transferase subunit alpha. The tract at residues 268–295 (GREPVGAGHESECPPVDGSSTQERGADK) is disordered. A CoA carboxyltransferase C-terminal domain is found at 282–534 (PVDGSSTQER…REAVLAHLVP (253 aa)).

The protein in the N-terminal section; belongs to the AccD/PCCB family. It in the C-terminal section; belongs to the AccA family. In terms of assembly, acetyl-CoA carboxylase is a heterotetramer composed of biotin carboxyl carrier protein (AccB), biotin carboxylase (AccC) and two subunits of ACCase subunit beta/alpha. The cofactor is Zn(2+).

It localises to the cytoplasm. The catalysed reaction is N(6)-carboxybiotinyl-L-lysyl-[protein] + acetyl-CoA = N(6)-biotinyl-L-lysyl-[protein] + malonyl-CoA. It participates in lipid metabolism; malonyl-CoA biosynthesis; malonyl-CoA from acetyl-CoA: step 1/1. Component of the acetyl coenzyme A carboxylase (ACC) complex. Biotin carboxylase (BC) catalyzes the carboxylation of biotin on its carrier protein (BCCP) and then the CO(2) group is transferred by the transcarboxylase to acetyl-CoA to form malonyl-CoA. The chain is Acetyl-coenzyme A carboxylase carboxyl transferase subunits beta/alpha (accD) from Salinispora tropica (strain ATCC BAA-916 / DSM 44818 / JCM 13857 / NBRC 105044 / CNB-440).